The sequence spans 145 residues: Large ribosomal subunit protein uL14m (145 aa).

Residues 1 to 30 constitute a mitochondrion transit peptide; it reads MAALTGLWGSFAHVSRAFSQRCFSTSGSLS.

This sequence belongs to the universal ribosomal protein uL14 family. Component of the mitochondrial ribosome large subunit (39S) which comprises a 16S rRNA and about 50 distinct proteins. Interacts with MALSU1.

The protein resides in the mitochondrion. May form part of 2 intersubunit bridges in the assembled ribosome. Upon binding to MALSU1, intersubunit bridge formation is blocked, preventing ribosome formation and repressing translation. This chain is Large ribosomal subunit protein uL14m (Mrpl14), found in Mus musculus (Mouse).